We begin with the raw amino-acid sequence, 47 residues long: Potassium channel toxin gamma-KTx 5.2 (47 aa).

4 disulfides stabilise this stretch: Cys5–Cys23, Cys11–Cys34, Cys20–Cys39, and Cys24–Cys41.

The protein belongs to the ergtoxin family. Gamma-KTx 5 subfamily. Expressed by the venom gland.

It localises to the secreted. Reversibly blocks Kv11/ERG potassium channels. The sequence is that of Potassium channel toxin gamma-KTx 5.2 from Centruroides gracilis (Slenderbrown scorpion).